The chain runs to 141 residues: Transmembrane protein 216 (141 aa).

4 helical membrane-spanning segments follow: residues 15 to 35 (VLFF…LLIF), 49 to 69 (LVLD…RLFF), 82 to 102 (LGIS…YLLL), and 115 to 135 (SILL…LATF).

As to quaternary structure, part of the tectonic-like complex (also named B9 complex). Interacts with TMEM107.

Its subcellular location is the membrane. The protein localises to the cytoplasm. It is found in the cytoskeleton. The protein resides in the cilium basal body. In terms of biological role, part of the tectonic-like complex which is required for tissue-specific ciliogenesis and may regulate ciliary membrane composition. This Mus musculus (Mouse) protein is Transmembrane protein 216 (Tmem216).